The following is a 273-amino-acid chain: Major prion protein homolog (273 aa).

The first 24 residues, 1–24 (MARLLTTCCLLALLLAACTDVALS), serve as a signal peptide directing secretion. The tract at residues 25–121 (KKGKGKPSGG…QKPWKPPKTN (97 aa)) is disordered. 8 tandem repeats follow at residues 42-47 (RQPSYP), 48-53 (RQPGYP), 54-59 (HNPGYP), 60-65 (HNPGYP), 66-71 (HNPGYP), 72-77 (HNPGYP), 78-83 (HNPGYP), and 84-89 (QNPGYP). Residues 42–89 (RQPSYPRQPGYPHNPGYPHNPGYPHNPGYPHNPGYPHNPGYPQNPGYP) are 8 X 6 AA tandem repeats of [HR]-[NQ]-P-G-Y-P. Residues 51–94 (GYPHNPGYPHNPGYPHNPGYPHNPGYPHNPGYPQNPGYPHNPGY) show a composition bias toward low complexity. Positions 66, 72, and 78 each coordinate Cu(2+). Positions 90 and 93 each coordinate Cu(2+). The span at 101 to 111 (YNPSSGGSYHN) shows a compositional bias: polar residues. Residues C192 and C237 are joined by a disulfide bond. N-linked (GlcNAc...) asparagine glycosylation is found at N194, N209, and N218. S248 carries the GPI-anchor amidated serine lipid modification. A propeptide spans 249 to 273 (GIQLHPADTWLAVLLLLLTTLFAMH) (removed in mature form).

Belongs to the prion family. In terms of assembly, monomer and homodimer. Has a tendency to aggregate into amyloid fibrils containing a cross-beta spine, formed by a steric zipper of superposed beta-strands. Soluble oligomers may represent an intermediate stage on the path to fibril formation. Copper binding may promote oligomerization. As to expression, spinal cord and brain.

Its subcellular location is the cell membrane. Functionally, its primary physiological function is unclear. Has cytoprotective activity against internal or environmental stresses. May play a role in neuronal development and synaptic plasticity. May be required for neuronal myelin sheath maintenance. May play a role in iron uptake and iron homeostasis. Soluble oligomers are toxic to cultured neuroblastoma cells and induce apoptosis (in vitro). Association with GPC1 (via its heparan sulfate chains) targets PRNP to lipid rafts. Also provides Cu(2+) or Zn(2+) for the ascorbate-mediated GPC1 deaminase degradation of its heparan sulfate side chains. This chain is Major prion protein homolog (PRNP), found in Gallus gallus (Chicken).